The chain runs to 100 residues: Enhancer of yellow 2 transcription factor (100 aa).

This sequence belongs to the ENY2 family. Component of the nuclear pore complex (NPC)-associated AMEX complex (anchoring and mRNA export complex), composed of at least e(y)2 and xmas-2. Component of the SAGA transcription coactivator-HAT complexes, at least composed of Ada2b, e(y)2, Pcaf/Gcn5, Taf10 and Nipped-A/Trrap. Within the SAGA complex, e(y)2, Sgf11, and not/nonstop form an additional subcomplex of SAGA called the DUB module (deubiquitination module). Component of the THO complex, composed of at least e(y)2, HPR1, THO2, THOC5, THOC6 and THOC7. Interacts with e(y)1. Interacts with su(Hw) (via zinc fingers). Interacts with xmas-2; required for localization to the nuclear periphery. Interacts with the nuclear pore complex (NPC).

It localises to the nucleus. The protein resides in the nucleoplasm. The protein localises to the cytoplasm. Its function is as follows. Involved in mRNA export coupled transcription activation by association with both the AMEX and the SAGA complexes. The SAGA complex is a multiprotein complex that activates transcription by remodeling chromatin and mediating histone acetylation and deubiquitination. Within the SAGA complex, participates in a subcomplex that specifically deubiquitinates histone H2B. The SAGA complex is recruited to specific gene promoters by activators, where it is required for transcription. Required for nuclear receptor-mediated transactivation. Involved in transcription elongation by recruiting the THO complex onto nascent mRNA. The AMEX complex functions in docking export-competent ribonucleoprotein particles (mRNPs) to the nuclear entrance of the nuclear pore complex (nuclear basket). AMEX participates in mRNA export and accurate chromatin positioning in the nucleus by tethering genes to the nuclear periphery. This is Enhancer of yellow 2 transcription factor from Drosophila pseudoobscura pseudoobscura (Fruit fly).